Consider the following 431-residue polypeptide: Serine--tRNA ligase (431 aa).

237-239 (TAE) provides a ligand contact to L-serine. Residue 268–270 (RSE) participates in ATP binding. E291 lines the L-serine pocket. 355-358 (EISS) serves as a coordination point for ATP. Position 390 (S390) interacts with L-serine.

It belongs to the class-II aminoacyl-tRNA synthetase family. Type-1 seryl-tRNA synthetase subfamily. Homodimer. The tRNA molecule binds across the dimer.

It is found in the cytoplasm. The catalysed reaction is tRNA(Ser) + L-serine + ATP = L-seryl-tRNA(Ser) + AMP + diphosphate + H(+). It catalyses the reaction tRNA(Sec) + L-serine + ATP = L-seryl-tRNA(Sec) + AMP + diphosphate + H(+). It participates in aminoacyl-tRNA biosynthesis; selenocysteinyl-tRNA(Sec) biosynthesis; L-seryl-tRNA(Sec) from L-serine and tRNA(Sec): step 1/1. In terms of biological role, catalyzes the attachment of serine to tRNA(Ser). Is also able to aminoacylate tRNA(Sec) with serine, to form the misacylated tRNA L-seryl-tRNA(Sec), which will be further converted into selenocysteinyl-tRNA(Sec). The protein is Serine--tRNA ligase of Neisseria gonorrhoeae (strain ATCC 700825 / FA 1090).